The sequence spans 45 residues: Protein PsbN (45 aa).

Residues F12 to G30 traverse the membrane as a helical segment.

Belongs to the PsbN family.

Its subcellular location is the plastid. It localises to the chloroplast thylakoid membrane. Functionally, may play a role in photosystem I and II biogenesis. This is Protein PsbN from Adiantum capillus-veneris (Maidenhair fern).